A 93-amino-acid polypeptide reads, in one-letter code: RNA-binding protein Hfq (93 aa).

Residues 9 to 68 (DPFLNALRRERVPVSIYLVNGIKLQGQVESFDQFVILLKNTVSQMVYKHAISTVVPARPF) form the Sm domain. The segment at 70–93 (VNSHTAAPSPAGGFNGQQDDNNDQ) is disordered.

Belongs to the Hfq family. Homohexamer.

Functionally, RNA chaperone that binds small regulatory RNA (sRNAs) and mRNAs to facilitate mRNA translational regulation in response to envelope stress, environmental stress and changes in metabolite concentrations. Also binds with high specificity to tRNAs. This chain is RNA-binding protein Hfq, found in Shewanella sediminis (strain HAW-EB3).